Here is a 148-residue protein sequence, read N- to C-terminus: 3-dehydroquinate dehydratase (148 aa).

Residue Y22 is the Proton acceptor of the active site. Residues N73, H79, and D86 each contribute to the substrate site. H99 acts as the Proton donor in catalysis. Substrate-binding positions include 100-101 (LS) and R110.

Belongs to the type-II 3-dehydroquinase family. As to quaternary structure, homododecamer.

It carries out the reaction 3-dehydroquinate = 3-dehydroshikimate + H2O. It participates in metabolic intermediate biosynthesis; chorismate biosynthesis; chorismate from D-erythrose 4-phosphate and phosphoenolpyruvate: step 3/7. Its function is as follows. Catalyzes a trans-dehydration via an enolate intermediate. This Jannaschia sp. (strain CCS1) protein is 3-dehydroquinate dehydratase.